The chain runs to 149 residues: Tetracenomycin polyketide synthase protein TcmJ (149 aa).

The region spanning 51–117 (HIELAPGESV…NRGNVPARVV (67 aa)) is the Cupin type-2 domain. The segment at 127–149 (PELGHVDTEPVPNPAAAPPKVGG) is disordered.

In terms of assembly, the tetracenomycin polyketide synthase (TCM PKS) is composed of a ketosynthase complex (TcmKL), an acyl carrier protein (TcmM), a cyclase (TcmN) and a probable second cyclase (TcmJ).

The enzyme catalyses 10 malonyl-CoA + 8 H(+) = tetracenomycin F2 + 10 CO2 + 10 CoA + 2 H2O. The protein operates within antibiotic biosynthesis; tetracenomycin C biosynthesis. In terms of biological role, involved in the biosynthesis of tetracenomycin C (TCM C). Part of a type II polyketide synthase (PKS) that catalyzes the synthesis of tetracenomycin F2 (TCM F2), a precursor of TCM C, from malonyl-CoA. TcmJ, while not absolutely required, greatly increases the tetracenomycin F2 production. It probably acts as a cyclase. This chain is Tetracenomycin polyketide synthase protein TcmJ, found in Streptomyces glaucescens.